We begin with the raw amino-acid sequence, 103 residues long: Large ribosomal subunit protein bL21 (103 aa).

The protein belongs to the bacterial ribosomal protein bL21 family. In terms of assembly, part of the 50S ribosomal subunit. Contacts protein L20.

In terms of biological role, this protein binds to 23S rRNA in the presence of protein L20. The chain is Large ribosomal subunit protein bL21 from Histophilus somni (strain 129Pt) (Haemophilus somnus).